The following is an 89-amino-acid chain: Small ribosomal subunit protein uS15 (89 aa).

The protein belongs to the universal ribosomal protein uS15 family. Part of the 30S ribosomal subunit. Forms a bridge to the 50S subunit in the 70S ribosome, contacting the 23S rRNA.

In terms of biological role, one of the primary rRNA binding proteins, it binds directly to 16S rRNA where it helps nucleate assembly of the platform of the 30S subunit by binding and bridging several RNA helices of the 16S rRNA. Its function is as follows. Forms an intersubunit bridge (bridge B4) with the 23S rRNA of the 50S subunit in the ribosome. The polypeptide is Small ribosomal subunit protein uS15 (Baumannia cicadellinicola subsp. Homalodisca coagulata).